The chain runs to 314 residues: MSNQQTHVRKPDWLKTRINTNKSYRNLKKLMRDNRLNTVCEEARCPNLHECWSERKTATFMILGDTCTRGCRFCAVKTGLPNELDWGEPERVADSVTVMGLKHVVVTAVARDDLNDGGAAVFAETVRAIRRKNPGCTIEILPSDMKGDYESLHTLMDSGPDIFNHNIETVRRLTKRVRARAMYDRSLELLRRVKEIAPNTPTKSSIMVGLGEEKDEIIQAMDDLLAHNVDIVTLGQYLQPTKKHLEVVRYYHPDEFEELKNIALEKGFSHCESGPLVRSSYHADEQVSNAAAQRRIKYMKGVEKQENSQLDFNF.

[4Fe-4S] cluster is bound by residues Cys40, Cys45, Cys51, Cys67, Cys71, Cys74, and Ser280. In terms of domain architecture, Radical SAM core spans Ser53–Ser269.

The protein belongs to the radical SAM superfamily. Lipoyl synthase family. The cofactor is [4Fe-4S] cluster.

The protein localises to the cytoplasm. It catalyses the reaction [[Fe-S] cluster scaffold protein carrying a second [4Fe-4S](2+) cluster] + N(6)-octanoyl-L-lysyl-[protein] + 2 oxidized [2Fe-2S]-[ferredoxin] + 2 S-adenosyl-L-methionine + 4 H(+) = [[Fe-S] cluster scaffold protein] + N(6)-[(R)-dihydrolipoyl]-L-lysyl-[protein] + 4 Fe(3+) + 2 hydrogen sulfide + 2 5'-deoxyadenosine + 2 L-methionine + 2 reduced [2Fe-2S]-[ferredoxin]. It participates in protein modification; protein lipoylation via endogenous pathway; protein N(6)-(lipoyl)lysine from octanoyl-[acyl-carrier-protein]. In terms of biological role, catalyzes the radical-mediated insertion of two sulfur atoms into the C-6 and C-8 positions of the octanoyl moiety bound to the lipoyl domains of lipoate-dependent enzymes, thereby converting the octanoylated domains into lipoylated derivatives. In Oceanobacillus iheyensis (strain DSM 14371 / CIP 107618 / JCM 11309 / KCTC 3954 / HTE831), this protein is Lipoyl synthase.